The primary structure comprises 1379 residues: MAQTLSFNGRRRVRKFFGKIPEVAEMPNLIEVQKASYDQFLMVDEPEGGRPDEGLQTVFKSVFPITDFSGASMLEFVSYEFEPPKFDVDECRQRDLTYAAPLKVTLRLIVFDIDEDTGARSIKDIKEQSVYMGDMPLMTNNGTFIVNGTERVIVSQMHRSPGVFFDHDKGKSHSSGKLLFAARVIPYRGSWLDIEFDAKDIVHARIDRRRKIPVTSLLMALGMDGEEILSTFYSKSDYKRDGKGWRVPFQAETLKGSKTLVDMVDADSGEVVVEAGKKLTPRLLRQLQDKGLKALKATDEDLYGNYLAEDIVNFATGEIYLEAGDEIDEKTLPIILDAGFEEIPVLGIDHINVGAYIRNTLAADKNENRQDALFDIYRVMRPGEPPTMDSAEAMFNSLFFDSERYDLSAVGRVKMNMRLDLEVADTVRVLRKEDILAVVKMLVELRDGKGEIDDIDNLGNRRVRSVGELMENQYRLGLLRMERAIKERMSSIEIDTVMPQDLINAKPAAAAVREFFGSSQLSQFMDQVNPLSEITHKRRLSALGPGGLTRERAGFEVRDVHPTHYGRICPIETPEGPNIGLINSLATFARVNKYGFIESPYRKIIDGVVTKDVIYLSAMEEAKYYVAQANAELNAEGKFVEEFVVCRHAGEVMLSPRDTINLMDVSPKQLVSVAAALIPFLENDDANRALMGSNMQRQAVPLLRAEAPFVGTGMEPIVARDSGAAIGARRGGVVDQVDATRIVIRATEDLDAGKSGVDIYRLQKFQRSNQNTCVNQRPLVAVGDILNKGDIIADGPSTDLGDLALGRNALVAFMPWNGYNYEDSILMSERIVSEDVFTSIHIEEFEVMARDTKLGPEEITRDIPNVSEEALRNLDEAGIVYIGAEVQPGDILVGKITPKGESPMTPEEKLLRAIFGEKASDVRDTSMRMPPGTFGTIVEVRVFNRHGVEKDERAMAIEREEIERLAKDRDDEQAILDRNVYGRLLDTLRGQVSIAGPKGFKKGVELNNAVISEYPRSQWWMFAVEDEKVQSELEALRGQYDESKSRLEQRFMDKVEKVQRGDEMPPGVMKMVKVFVAVKRKIQPGDKMAGRHGNKGVVSRIVPVEDMPFLEDGTHVDIVLNPLGVPSRMNVGQILETHLAWACAGMGRKIGQMLEDYQKHLDITELRTELVDLYASESHDEVARFDDESLLRLADQAKSGLSIATPVFDGAHESDVSEMLTRAGLHTSGQSVLYDGRTGETFDRKVTVGYMYMIKLNHLVDDKIHARSIGPYSLVTQQPLGGKAQFGGQRFGEMEVWALEAYGAAYTLQEMLTVKSDDVAGRTKVYEAIVRGDDTFEAGIPESFNVLVKEMRSLGLSVELENSKLETADTVNPLPDAAE.

This sequence belongs to the RNA polymerase beta chain family. In terms of assembly, the RNAP catalytic core consists of 2 alpha, 1 beta, 1 beta' and 1 omega subunit. When a sigma factor is associated with the core the holoenzyme is formed, which can initiate transcription.

It carries out the reaction RNA(n) + a ribonucleoside 5'-triphosphate = RNA(n+1) + diphosphate. In terms of biological role, DNA-dependent RNA polymerase catalyzes the transcription of DNA into RNA using the four ribonucleoside triphosphates as substrates. The sequence is that of DNA-directed RNA polymerase subunit beta from Allorhizobium ampelinum (strain ATCC BAA-846 / DSM 112012 / S4) (Agrobacterium vitis (strain S4)).